Here is a 311-residue protein sequence, read N- to C-terminus: Methionyl-tRNA formyltransferase (311 aa).

110–113 (SLLP) is a (6S)-5,6,7,8-tetrahydrofolate binding site.

It belongs to the Fmt family.

It carries out the reaction L-methionyl-tRNA(fMet) + (6R)-10-formyltetrahydrofolate = N-formyl-L-methionyl-tRNA(fMet) + (6S)-5,6,7,8-tetrahydrofolate + H(+). In terms of biological role, attaches a formyl group to the free amino group of methionyl-tRNA(fMet). The formyl group appears to play a dual role in the initiator identity of N-formylmethionyl-tRNA by promoting its recognition by IF2 and preventing the misappropriation of this tRNA by the elongation apparatus. The polypeptide is Methionyl-tRNA formyltransferase (Streptococcus pyogenes serotype M12 (strain MGAS2096)).